Reading from the N-terminus, the 372-residue chain is Delta-type opioid receptor (372 aa).

Over methionine 1 to alanine 47 the chain is Extracellular. 2 N-linked (GlcNAc...) asparagine glycosylation sites follow: asparagine 18 and asparagine 33. A helical membrane pass occupies residues leucine 48–valine 75. Topologically, residues arginine 76–asparagine 85 are cytoplasmic. The helical transmembrane segment at isoleucine 86–leucine 110 threads the bilayer. Topologically, residues methionine 111–lysine 122 are extracellular. Cysteines 121 and 198 form a disulfide. Residues alanine 123 to valine 144 form a helical membrane-spanning segment. The Cytoplasmic portion of the chain corresponds to aspartate 145–alanine 163. A helical transmembrane segment spans residues lysine 164 to methionine 186. Topologically, residues alanine 187–serine 206 are extracellular. The chain crosses the membrane as a helical span at residues tryptophan 207–leucine 238. Residues arginine 239–arginine 261 are Cytoplasmic-facing. Residues methionine 262–tryptophan 284 traverse the membrane as a helical segment. Residues threonine 285–alanine 299 are Extracellular-facing. Residues leucine 300–leucine 321 form a helical membrane-spanning segment. The Cytoplasmic portion of the chain corresponds to aspartate 322–alanine 372. A lipid anchor (S-palmitoyl cysteine) is attached at cysteine 333. The interval glutamine 340 to alanine 372 is disordered.

It belongs to the G-protein coupled receptor 1 family. As to quaternary structure, may form homooligomers. Forms a heterodimer with OPRM1. Interacts with GPRASP1. Interacts with RTP4; the interaction promotes cell surface localization of the OPRD1-OPRM1 heterodimer. In terms of processing, ubiquitinated. A basal ubiquitination seems not to be related to degradation. Ubiquitination is increased upon formation of OPRM1:OPRD1 oligomers leading to proteasomal degradation; the ubiquitination is diminished by RTP4. As to expression, detected in brain, brain stem and brain cortex.

It localises to the cell membrane. G-protein coupled receptor that functions as a receptor for endogenous enkephalins and for a subset of other opioids. Ligand binding causes a conformation change that triggers signaling via guanine nucleotide-binding proteins (G proteins) and modulates the activity of down-stream effectors, such as adenylate cyclase. Signaling leads to the inhibition of adenylate cyclase activity. Inhibits neurotransmitter release by reducing calcium ion currents and increasing potassium ion conductance. Plays a role in the perception of pain and in opiate-mediated analgesia. Plays a role in developing analgesic tolerance to morphine. In Rattus norvegicus (Rat), this protein is Delta-type opioid receptor (Oprd1).